The following is a 293-amino-acid chain: MMRIALFLLTNLAVMLVFGLVLSLTGIQSSSVQGLMIMAGLFGFGGAFVSLLMSKWMALRSVGGEVIEQPRNETERWLLDTVRRQSQQAGIAMPQVAIYQAPDINAFATGARRDASLVAVSTGLLQNMSRDEAEAVIAHEISHVANGDMVTMTLIQGIVNTFVIFISRLIAQVAAGFLSGDRDNEGSSSGNPMVYFAVSMVLELVFGILASIITMWFSRHREFHADAGSARLVGREKMIAALQRLKTSYEPQEAGNLMAFCINGKSKSFSELFMSHPPLDKRIEALRSGEYLK.

2 helical membrane passes run 4-24 (IALF…VLSL) and 34-54 (GLMI…LLMS). Residue H139 participates in Zn(2+) binding. E140 is a catalytic residue. H143 serves as a coordination point for Zn(2+). The next 2 membrane-spanning stretches (helical) occupy residues 158–178 (IVNT…AGFL) and 193–213 (MVYF…ASII). E222 serves as a coordination point for Zn(2+).

Belongs to the peptidase M48B family. Zn(2+) serves as cofactor.

The protein localises to the cell inner membrane. The protein is Protease HtpX of Yersinia enterocolitica serotype O:8 / biotype 1B (strain NCTC 13174 / 8081).